The following is a 400-amino-acid chain: Bifunctional enzyme IspD/IspF (400 aa).

Positions 1–240 (MQESTMKFGI…EKLSHALPDV (240 aa)) are 2-C-methyl-D-erythritol 4-phosphate cytidylyltransferase. The 2-C-methyl-D-erythritol 2,4-cyclodiphosphate synthase stretch occupies residues 241–400 (RTGNGYDVHQ…ATVVYQGRPL (160 aa)). Residues aspartate 247 and histidine 249 each coordinate a divalent metal cation. Residues 247-249 (DVH) and 273-274 (HS) contribute to the 4-CDP-2-C-methyl-D-erythritol 2-phosphate site. A divalent metal cation is bound at residue histidine 281. 4-CDP-2-C-methyl-D-erythritol 2-phosphate is bound by residues 295 to 297 (DIG), 371 to 374 (TTNE), phenylalanine 378, and arginine 381.

This sequence in the N-terminal section; belongs to the IspD/TarI cytidylyltransferase family. IspD subfamily. The protein in the C-terminal section; belongs to the IspF family. The cofactor is a divalent metal cation.

The enzyme catalyses 2-C-methyl-D-erythritol 4-phosphate + CTP + H(+) = 4-CDP-2-C-methyl-D-erythritol + diphosphate. It carries out the reaction 4-CDP-2-C-methyl-D-erythritol 2-phosphate = 2-C-methyl-D-erythritol 2,4-cyclic diphosphate + CMP. The protein operates within isoprenoid biosynthesis; isopentenyl diphosphate biosynthesis via DXP pathway; isopentenyl diphosphate from 1-deoxy-D-xylulose 5-phosphate: step 2/6. It functions in the pathway isoprenoid biosynthesis; isopentenyl diphosphate biosynthesis via DXP pathway; isopentenyl diphosphate from 1-deoxy-D-xylulose 5-phosphate: step 4/6. Functionally, bifunctional enzyme that catalyzes the formation of 4-diphosphocytidyl-2-C-methyl-D-erythritol from CTP and 2-C-methyl-D-erythritol 4-phosphate (MEP) (IspD), and catalyzes the conversion of 4-diphosphocytidyl-2-C-methyl-D-erythritol 2-phosphate (CDP-ME2P) to 2-C-methyl-D-erythritol 2,4-cyclodiphosphate (ME-CPP) with a corresponding release of cytidine 5-monophosphate (CMP) (IspF). This is Bifunctional enzyme IspD/IspF from Agrobacterium fabrum (strain C58 / ATCC 33970) (Agrobacterium tumefaciens (strain C58)).